Reading from the N-terminus, the 367-residue chain is Chorismate synthase (367 aa).

Residues 41–60 (FTHDLQRRASGKSRHTSARR) form a disordered region. NADP(+)-binding residues include R48 and R54. FMN-binding positions include 125–127 (RSS), 238–239 (NA), G278, 293–297 (KPTSS), and R319.

Belongs to the chorismate synthase family. As to quaternary structure, homotetramer. FMNH2 serves as cofactor.

The enzyme catalyses 5-O-(1-carboxyvinyl)-3-phosphoshikimate = chorismate + phosphate. It functions in the pathway metabolic intermediate biosynthesis; chorismate biosynthesis; chorismate from D-erythrose 4-phosphate and phosphoenolpyruvate: step 7/7. Catalyzes the anti-1,4-elimination of the C-3 phosphate and the C-6 proR hydrogen from 5-enolpyruvylshikimate-3-phosphate (EPSP) to yield chorismate, which is the branch point compound that serves as the starting substrate for the three terminal pathways of aromatic amino acid biosynthesis. This reaction introduces a second double bond into the aromatic ring system. This Xanthomonas axonopodis pv. citri (strain 306) protein is Chorismate synthase.